The primary structure comprises 206 residues: Large ribosomal subunit protein uL4 (206 aa).

Belongs to the universal ribosomal protein uL4 family. Part of the 50S ribosomal subunit.

Functionally, one of the primary rRNA binding proteins, this protein initially binds near the 5'-end of the 23S rRNA. It is important during the early stages of 50S assembly. It makes multiple contacts with different domains of the 23S rRNA in the assembled 50S subunit and ribosome. In terms of biological role, forms part of the polypeptide exit tunnel. The chain is Large ribosomal subunit protein uL4 from Cereibacter sphaeroides (strain ATCC 17025 / ATH 2.4.3) (Rhodobacter sphaeroides).